The sequence spans 442 residues: tRNA modification GTPase MnmE (442 aa).

The (6S)-5-formyl-5,6,7,8-tetrahydrofolate site is built by Arg-22, Glu-79, and Lys-119. In terms of domain architecture, TrmE-type G spans 216-366 (GIKTCLVGAP…LLEKIKSIFA (151 aa)). Asn-226 is a K(+) binding site. GTP contacts are provided by residues 226-231 (NSGKSS), 245-251 (SEIPGTT), and 270-273 (DTAG). Ser-230 serves as a coordination point for Mg(2+). 3 residues coordinate K(+): Ser-245, Ile-247, and Thr-250. Mg(2+) is bound at residue Thr-251. (6S)-5-formyl-5,6,7,8-tetrahydrofolate is bound at residue Lys-442.

It belongs to the TRAFAC class TrmE-Era-EngA-EngB-Septin-like GTPase superfamily. TrmE GTPase family. Homodimer. Heterotetramer of two MnmE and two MnmG subunits. The cofactor is K(+).

The protein localises to the cytoplasm. Exhibits a very high intrinsic GTPase hydrolysis rate. Involved in the addition of a carboxymethylaminomethyl (cmnm) group at the wobble position (U34) of certain tRNAs, forming tRNA-cmnm(5)s(2)U34. This chain is tRNA modification GTPase MnmE, found in Mesomycoplasma hyopneumoniae (strain J / ATCC 25934 / NCTC 10110) (Mycoplasma hyopneumoniae).